The sequence spans 249 residues: Sugar fermentation stimulation protein homolog (249 aa).

This sequence belongs to the SfsA family.

In Synechococcus sp. (strain CC9902), this protein is Sugar fermentation stimulation protein homolog.